The following is a 333-amino-acid chain: Anthranilate phosphoribosyltransferase (333 aa).

Residues Gly-81, 84 to 85 (GD), Thr-89, 91 to 94 (NIST), 109 to 117 (KHGNRSVSS), and Ala-121 each bind 5-phospho-alpha-D-ribose 1-diphosphate. Residue Gly-81 coordinates anthranilate. Ser-93 lines the Mg(2+) pocket. Position 112 (Asn-112) interacts with anthranilate. Position 167 (Arg-167) interacts with anthranilate. Mg(2+)-binding residues include Asp-225 and Glu-226.

It belongs to the anthranilate phosphoribosyltransferase family. As to quaternary structure, homodimer. Requires Mg(2+) as cofactor.

The enzyme catalyses N-(5-phospho-beta-D-ribosyl)anthranilate + diphosphate = 5-phospho-alpha-D-ribose 1-diphosphate + anthranilate. It functions in the pathway amino-acid biosynthesis; L-tryptophan biosynthesis; L-tryptophan from chorismate: step 2/5. Its function is as follows. Catalyzes the transfer of the phosphoribosyl group of 5-phosphorylribose-1-pyrophosphate (PRPP) to anthranilate to yield N-(5'-phosphoribosyl)-anthranilate (PRA). The sequence is that of Anthranilate phosphoribosyltransferase from Haemophilus influenzae (strain PittGG).